Here is a 212-residue protein sequence, read N- to C-terminus: Vesicle transport protein SFT2C (212 aa).

Over 1–78 the chain is Cytoplasmic; that stretch reads MADLHRQLQD…TRGQRLVAGG (78 aa). A helical transmembrane segment spans residues 79-99; sequence LCLLLAALCFGLAALYAPVLL. Residues 100 to 104 are Lumenal-facing; that stretch reads LRARK. The chain crosses the membrane as a helical span at residues 105 to 125; that stretch reads FALLWSLGSVLAWASAALLRG. Topologically, residues 126 to 142 are cytoplasmic; the sequence is GPACGRLLRGEETPSRS. The helical transmembrane segment at 143–165 threads the bilayer; it reads TLGYAAALGATLYAALVLRSTVL. The Lumenal segment spans residues 166–174; it reads TALGACAQV. The helical transmembrane segment at 175-197 threads the bilayer; the sequence is AALLYALIGLLPWGGVTALRLAL. Residues 198–212 lie on the Cytoplasmic side of the membrane; that stretch reads GRLNRGTGLANALPV.

It belongs to the SFT2 family.

It localises to the membrane. May be involved in fusion of retrograde transport vesicles derived from an endocytic compartment with the Golgi complex. The protein is Vesicle transport protein SFT2C of Mus musculus (Mouse).